We begin with the raw amino-acid sequence, 191 residues long: Pyridoxal 5'-phosphate synthase subunit PdxT (191 aa).

Position 48–50 (48–50 (GES)) interacts with L-glutamine. Residue Cys-79 is the Nucleophile of the active site. Residues Arg-106 and 134–135 (IR) each bind L-glutamine. Residues His-170 and Glu-172 each act as charge relay system in the active site.

The protein belongs to the glutaminase PdxT/SNO family. In terms of assembly, in the presence of PdxS, forms a dodecamer of heterodimers. Only shows activity in the heterodimer.

The enzyme catalyses aldehydo-D-ribose 5-phosphate + D-glyceraldehyde 3-phosphate + L-glutamine = pyridoxal 5'-phosphate + L-glutamate + phosphate + 3 H2O + H(+). It catalyses the reaction L-glutamine + H2O = L-glutamate + NH4(+). The protein operates within cofactor biosynthesis; pyridoxal 5'-phosphate biosynthesis. Its function is as follows. Catalyzes the hydrolysis of glutamine to glutamate and ammonia as part of the biosynthesis of pyridoxal 5'-phosphate. The resulting ammonia molecule is channeled to the active site of PdxS. In Oenococcus oeni (strain ATCC BAA-331 / PSU-1), this protein is Pyridoxal 5'-phosphate synthase subunit PdxT.